Reading from the N-terminus, the 434-residue chain is ATP-sensitive inward rectifier potassium channel 14 (434 aa).

Over 1–81 the chain is Cytoplasmic; sequence MGLARALRRL…LSDLFTTCVD (81 aa). Cys-79 is subject to S-nitrosocysteine. Residues 82–108 traverse the membrane as a helical segment; it reads VRWRWMCLLFSCSFLASWLLFGLTFWL. The Extracellular portion of the chain corresponds to 109–131; sequence IASLHGDLAAPPPPAPCFSQVAS. The segment at residues 132–148 is an intramembrane region (helical; Pore-forming); the sequence is FLAAFLFALETQTSIGY. The Selectivity filter signature appears at 145–150; sequence SIGYGV. Over 149 to 157 the chain is Extracellular; sequence GVRSVTEEC. Residues 158 to 185 traverse the membrane as a helical segment; sequence PAAVAAVVLQCIAGCVLDAFVVGAVMAK. The Cytoplasmic segment spans residues 186 to 434; sequence MAKPKKRNET…TPTLALTLPP (249 aa). Residues 398–434 form a disordered region; it reads QEEDEEEDTKEGTSAETPERAASPQALTPTLALTLPP. Over residues 407 to 416 the composition is skewed to basic and acidic residues; sequence KEGTSAETPE. Residues 418-434 show a composition bias toward low complexity; sequence AASPQALTPTLALTLPP.

This sequence belongs to the inward rectifier-type potassium channel (TC 1.A.2.1) family. KCNJ14 subfamily.

It localises to the membrane. It carries out the reaction K(+)(in) = K(+)(out). With respect to regulation, channel activity is regulated by variations of cytosolic pH; channels are activated by alkaline and inhibited by acidic pH values. Inhibited by Ba(2+) and Cs(+) in a voltage-dependent manner; sensitivity to those inhibitors is lower than in other Kir channels. Its function is as follows. Inward rectifier potassium channels are characterized by a greater tendency to allow potassium to flow into the cell rather than out of it. Their voltage dependence is regulated by the concentration of extracellular potassium; as external potassium is raised, the voltage range of the channel opening shifts to more positive voltages. In Mus musculus (Mouse), this protein is ATP-sensitive inward rectifier potassium channel 14 (Kcnj14).